Here is a 79-residue protein sequence, read N- to C-terminus: Protein SNA2 (79 aa).

At 1 to 6 the chain is on the cytoplasmic side; sequence MHARDW. A helical transmembrane segment spans residues 7 to 27; sequence FLVFIAIFIPPLAVWLKRGFF. Over 28–32 the chain is Vesicular; it reads TKDLL. Residues 33 to 53 traverse the membrane as a helical segment; that stretch reads INFLLFLLGFFPGLIHALYVI. Residues 54 to 79 are Cytoplasmic-facing; it reads SCHPYEENEARYSHLSSSDDNYGSLA. Phosphoserine occurs at positions 71 and 77.

The protein belongs to the UPF0057 (PMP3) family.

The protein localises to the membrane. It localises to the lipid droplet. In Saccharomyces cerevisiae (strain ATCC 204508 / S288c) (Baker's yeast), this protein is Protein SNA2 (SNA2).